We begin with the raw amino-acid sequence, 371 residues long: Glutamate 5-kinase (371 aa).

Lys14 serves as a coordination point for ATP. 3 residues coordinate substrate: Ser54, Asp141, and Asn153. 173–174 contacts ATP; the sequence is TD. A PUA domain is found at 280-357; the sequence is AGDLILDDGA…TQIEKLLGYI (78 aa).

It belongs to the glutamate 5-kinase family.

The protein resides in the cytoplasm. The enzyme catalyses L-glutamate + ATP = L-glutamyl 5-phosphate + ADP. It participates in amino-acid biosynthesis; L-proline biosynthesis; L-glutamate 5-semialdehyde from L-glutamate: step 1/2. In terms of biological role, catalyzes the transfer of a phosphate group to glutamate to form L-glutamate 5-phosphate. In Aromatoleum aromaticum (strain DSM 19018 / LMG 30748 / EbN1) (Azoarcus sp. (strain EbN1)), this protein is Glutamate 5-kinase.